The chain runs to 321 residues: Cytochrome f (321 aa).

The N-terminal stretch at 1–35 (MQNRKTYDDWVKKWITQSISVLIMIDIMTRTSIAN) is a signal peptide. Residues Tyr-37, Cys-57, Cys-60, and His-61 each coordinate heme. A helical membrane pass occupies residues 287 to 307 (VQGLLLFLASVVLAQIFLVLK).

It belongs to the cytochrome f family. As to quaternary structure, the 4 large subunits of the cytochrome b6-f complex are cytochrome b6, subunit IV (17 kDa polypeptide, petD), cytochrome f and the Rieske protein, while the 4 small subunits are PetG, PetL, PetM and PetN. The complex functions as a dimer. Heme serves as cofactor.

The protein resides in the plastid. The protein localises to the chloroplast thylakoid membrane. Component of the cytochrome b6-f complex, which mediates electron transfer between photosystem II (PSII) and photosystem I (PSI), cyclic electron flow around PSI, and state transitions. The protein is Cytochrome f of Cryptomeria japonica (Japanese cedar).